The following is a 61-amino-acid chain: Small ribosomal subunit protein uS14 (61 aa).

Positions 24, 27, 40, and 43 each coordinate Zn(2+).

This sequence belongs to the universal ribosomal protein uS14 family. Zinc-binding uS14 subfamily. Part of the 30S ribosomal subunit. Contacts proteins S3 and S10. Requires Zn(2+) as cofactor.

Its function is as follows. Binds 16S rRNA, required for the assembly of 30S particles and may also be responsible for determining the conformation of the 16S rRNA at the A site. The protein is Small ribosomal subunit protein uS14 of Syntrophobacter fumaroxidans (strain DSM 10017 / MPOB).